We begin with the raw amino-acid sequence, 271 residues long: Eukaryotic translation initiation factor 3 subunit G (271 aa).

2 disordered regions span residues 1–29 and 143–185; these read MPALDDIKSSWADEVESDSGSLPPPSEVI and KPTK…MRGR. One can recognise an RRM domain in the interval 189–267; sequence SAIRISNLSE…LILSVEWSKP (79 aa).

Belongs to the eIF-3 subunit G family. As to quaternary structure, component of the eukaryotic translation initiation factor 3 (eIF-3) complex.

The protein resides in the cytoplasm. In terms of biological role, RNA-binding component of the eukaryotic translation initiation factor 3 (eIF-3) complex, which is involved in protein synthesis of a specialized repertoire of mRNAs and, together with other initiation factors, stimulates binding of mRNA and methionyl-tRNAi to the 40S ribosome. The eIF-3 complex specifically targets and initiates translation of a subset of mRNAs involved in cell proliferation. This subunit can bind 18S rRNA. In Anopheles gambiae (African malaria mosquito), this protein is Eukaryotic translation initiation factor 3 subunit G.